Consider the following 136-residue polypeptide: Small ribosomal subunit protein uS11c (136 aa).

The protein belongs to the universal ribosomal protein uS11 family. Part of the 30S ribosomal subunit.

The protein resides in the plastid. Its subcellular location is the chloroplast. The protein is Small ribosomal subunit protein uS11c of Helianthus annuus (Common sunflower).